The following is a 1342-amino-acid chain: MVYSYTEKKRIRKDFGKRPQVLDVPYLLSIQLDSFQKFIEQDPEGQYGLEAAFRSVFPIQSYSGNSELQYVSYRLGEPVFDVQECQIRGVTYSAPLRVKLRLVIYEREAPEGTVKDIKEQEVYMGEIPLMTDNGTFVINGTERVIVSQLHRSPGVFFDSDKGKTHSSGKVLYNARIIPYRGSWLDFEFDPKDNLFVRIDRRRKLPATIILRALNYTTEQILDLFFEKVIFEIRDNKLQMELVPERLRGETASFDIEANGKVYVEKGRRITARHIRQLEKDDVKLIEVPVEYIAGKVVAKDYIDESTGELICAANMELSLDLLAKLSQSGHKRIETLFTNDLDHGPYISETLRVDPTNDRLSALVEIYRMMRPGEPPTREAAESLFENLFFSEDRYDLSAVGRMKFNRSLLREEIEGSGILSKDDIIDVMKKLIDIRNGKGEVDDIDHLGNRRIRSVGEMAENQFRVGLVRVERAVKERLSLGDLDTLMPQDMINAKPISAAVKEFFGSSQLSQFMDQNNPLSEITHKRRISALGPGGLTRERAGFEVRDVHPTHYGRVCPIETPEGPNIGLINSLSVYAQTNEYGFLETPYRKVTDGVVTDEIHYLSAIEEGNYVIAQANSNLDEEGHFVEDLVTCRSKGESSLFSRDQVDYMDVSTQQVVSVGASLIPFLEHDDANRALMGANMQRQAVPTLRADKPLVGTGMERAVAVDSGVTAVAKRGGVVQYVDASRIVIKVNEDEMYPGEAGIDIYNLTKYTRSNQNTCINQMPCVSLGEPVERGDVLADGPSTDLGELALGQNMRVAFMPWNGYNFEDSILVSERVVQEDRFTTIHIQELACVSRDTKLGPEEITADIPNVGEAALSKLDESGIVYIGAEVTGGDILVGKVTPKGETQLTPEEKLLRAIFGEKASDVKDSSLRVPNGVSGTVIDVQVFTRDGVEKDKRALEIEEMQLKQAKKDLSEELQILEAGLFSRIRAVLVAGGVEAEKLDKLPRDRWLELGLTDEEKQNQLEQLAEQYDELKHEFEKKLEAKRRKITQGDDLAPGVLKIVKVYLAVKRRIQPGDKMAGRHGNKGVISKINPIEDMPYDENGTPVDIVLNPLGVPSRMNIGQILETHLGMAAKGIGDKINAMLKQQQEVAKLREFIQRAYDLGADVRQKVDLSTFSDEEVMRLAENLRKGMPIATPVFDGAKEAEIKELLKLGDLPTSGQIRLYDGRTGEQFERPVTVGYMYMLKLNHLVDDKMHARSTGSYSLVTQQPLGGKAQFGGQRFGEMEVWALEAYGAAYTLQEMLTVKSDDVNGRTKMYKNIVDGNHQMEPGMPESFNVLLKEIRSLGINIELEDE.

N6-acetyllysine occurs at positions 1022 and 1200.

Belongs to the RNA polymerase beta chain family. In terms of assembly, the RNAP catalytic core consists of 2 alpha, 1 beta, 1 beta' and 1 omega subunit. When a sigma factor is associated with the core the holoenzyme is formed, which can initiate transcription.

The catalysed reaction is RNA(n) + a ribonucleoside 5'-triphosphate = RNA(n+1) + diphosphate. DNA-dependent RNA polymerase catalyzes the transcription of DNA into RNA using the four ribonucleoside triphosphates as substrates. This is DNA-directed RNA polymerase subunit beta from Escherichia coli O139:H28 (strain E24377A / ETEC).